The sequence spans 688 residues: MAKHAPIFPNVQGFLHGGDYNPDQWLAYPDVLEQDVQLMREAKWNVVSLGIFSWVSLEPEEGLFTFEWLDEAIERLTHAGVRILLATPSGARPAWLSAKYPEVLRVGPDGRRNRHGGRHNHCYTSPIYREKVRIINRKLAERYAHHPGVIGWHVSNEYGGECHCPLCQEAFREWLKRKYKTLDALNHAWWTPFWSHTYTDWSQIESPMPHGETSIHGLNLDWKRFVTDQTVDFCRHEIEPLKQVNPNLPVTTNFMGTYPGLNYWRFRDVLDVISWDSYPRWHAHETLVPEAVHTAMVHDLNRSILKKPFLLMESTPSVTNWQAVSKQKRPGVHVLVSLQAVAHGADSVQYFQWRKSRGSYEKFHGAVVDHVGHANTRVFRDVQAVGEMLERLAPMAGAEVKADAAVIFDWENRWALEDAKGPRNIGMHYEETVVNHYAALWRMGVPMDVIDEEQPLDGYKLVVAPMLYMVRPGVAERMKAFVERGGSLVLTYWSGIVDENDLVFLGGFPGPLRELAGVWAEEIDALYDGERVPVRVADGNPLGLAGHYEARELCEVVHLEGAEPIAVYGADYYEGMPAATVHRVGKGKVYYVAARLEDAFLRDFFARVAAEAGVARAIERELPDGVSAMVRSGDGVEYVMLMNFTPEAREVALDEAEYKPLYGEAPTDGAVRLPAYGVSVLERPARNG.

R118 is a binding site for substrate. A Zn(2+)-binding site is contributed by C122. Residue N156 participates in substrate binding. Residue E157 is the Proton donor of the active site. Residues C162, C164, and C167 each contribute to the Zn(2+) site. E313 serves as the catalytic Nucleophile. Residues W321 and 361-364 each bind substrate; that span reads EKFH.

Belongs to the glycosyl hydrolase 42 family.

The catalysed reaction is Hydrolysis of terminal non-reducing beta-D-galactose residues in beta-D-galactosides.. Ca(2+), Mg(2+) and EDTA have little effect on enzyme activity at 1-10 mM. Zn(2+) at 3, 5, 7 or 10 mM inhibits activity by 20%, 30%, 40% and 65%, respectively. In terms of biological role, hydrolyzes o-nitrophenyl-beta-D-galactopyranoside (ONPG) and p-nitrophenyl-beta-D-fucopyranoside (PNPF), but not p-nitrophenyl-beta-D-glucopyranoside (PNPG), p-nitrophenyl-beta-D-xylopyranoside (PNPX) or p-nitrophenyl-beta-D-arabinopyranoside (PNPA). Also hydrolyzes lactose, including lactose in milk. This is Beta-galactosidase BglY (bglY) from Alicyclobacillus acidocaldarius subsp. acidocaldarius (strain ATCC 27009 / DSM 446 / BCRC 14685 / JCM 5260 / KCTC 1825 / NBRC 15652 / NCIMB 11725 / NRRL B-14509 / 104-IA) (Bacillus acidocaldarius).